The following is a 554-amino-acid chain: ATP synthase subunit alpha (554 aa).

173–180 (GDRQTGKT) lines the ATP pocket. The interval 531–554 (SHLAAEKVRKHVPPSKPTTQRTAG) is disordered.

This sequence belongs to the ATPase alpha/beta chains family. F-type ATPases have 2 components, CF(1) - the catalytic core - and CF(0) - the membrane proton channel. CF(1) has five subunits: alpha(3), beta(3), gamma(1), delta(1), epsilon(1). CF(0) has three main subunits: a(1), b(2) and c(9-12). The alpha and beta chains form an alternating ring which encloses part of the gamma chain. CF(1) is attached to CF(0) by a central stalk formed by the gamma and epsilon chains, while a peripheral stalk is formed by the delta and b chains.

It is found in the cell membrane. The enzyme catalyses ATP + H2O + 4 H(+)(in) = ADP + phosphate + 5 H(+)(out). Its function is as follows. Produces ATP from ADP in the presence of a proton gradient across the membrane. The alpha chain is a regulatory subunit. This chain is ATP synthase subunit alpha, found in Acidothermus cellulolyticus (strain ATCC 43068 / DSM 8971 / 11B).